The chain runs to 378 residues: Ferredoxin--NADP reductase, root isozyme, chloroplastic (378 aa).

A compositionally biased stretch (low complexity) spans 1 to 17 (MATAVASQVAVSAPAGS). The segment at 1-27 (MATAVASQVAVSAPAGSDRGLRSSGIQ) is disordered. A chloroplast-targeting transit peptide spans 1–62 (MATAVASQVA…PRHANKVLCM (62 aa)). Residues 93 to 221 (KEPYTATIVS…TGPSGKIMLL (129 aa)) enclose the FAD-binding FR-type domain. FAD is bound by residues 153 to 156 (RLYS), 174 to 176 (CVR), Tyr180, 195 to 197 (VCS), and Thr237. NADP(+)-binding residues include Ser156 and Arg176. Residues Thr237, 269 to 270 (VA), 299 to 300 (SR), Lys309, 337 to 338 (GL), and Glu376 each bind NADP(+).

It belongs to the ferredoxin--NADP reductase type 1 family. FAD serves as cofactor.

Its subcellular location is the plastid. The protein resides in the chloroplast. The enzyme catalyses 2 reduced [2Fe-2S]-[ferredoxin] + NADP(+) + H(+) = 2 oxidized [2Fe-2S]-[ferredoxin] + NADPH. Its pathway is energy metabolism; photosynthesis. Functionally, may play a key role in regulating the relative amounts of cyclic and non-cyclic electron flow to meet the demands of the plant for ATP and reducing power. Is involved in nitrate assimilation. The polypeptide is Ferredoxin--NADP reductase, root isozyme, chloroplastic (Oryza sativa subsp. japonica (Rice)).